The sequence spans 381 residues: uncharacterized protein (381 aa).

Residues 331–340 (MQNGYANNGR) are compositionally biased toward polar residues. Residues 331 to 381 (MQNGYANNGRNHQRERFERPEKNSKKNKFLPFNGSNKEKKRDKLKKNCVIM) form a disordered region. Residues 342–354 (HQRERFERPEKNS) are compositionally biased toward basic and acidic residues. The span at 372–381 (DKLKKNCVIM) shows a compositional bias: basic residues.

It localises to the cytoplasm. Its subcellular location is the nucleus. This is an uncharacterized protein from Saccharomyces cerevisiae (strain ATCC 204508 / S288c) (Baker's yeast).